The sequence spans 291 residues: Pirin-like protein (291 aa).

The protein belongs to the pirin family.

The protein localises to the nucleus. This chain is Pirin-like protein, found in Solanum lycopersicum (Tomato).